A 263-amino-acid polypeptide reads, in one-letter code: P29 (263 aa).

Over residues 30-39 the composition is skewed to basic and acidic residues; it reads VPEGLRDISK. The interval 30–93 is disordered; that stretch reads VPEGLRDISK…PKQKQLAPPI (64 aa). A compositionally biased stretch (polar residues) spans 52–64; it reads LSRASARPQQLQP.

The chain is P29 (p29) from Citrus sinensis (Sweet orange).